The sequence spans 348 residues: Glycerol-1-phosphate dehydrogenase [NAD(P)+] (348 aa).

Residues 94 to 98 (GKPID) and 116 to 119 (TAAS) contribute to the NAD(+) site. Asp-121 lines the substrate pocket. Ser-125 contributes to the NAD(+) binding site. Asp-168 lines the substrate pocket. The Zn(2+) site is built by Asp-168 and His-248. His-252 serves as a coordination point for substrate. His-264 provides a ligand contact to Zn(2+).

The protein belongs to the glycerol-1-phosphate dehydrogenase family. It depends on Zn(2+) as a cofactor.

The protein resides in the cytoplasm. It carries out the reaction sn-glycerol 1-phosphate + NAD(+) = dihydroxyacetone phosphate + NADH + H(+). It catalyses the reaction sn-glycerol 1-phosphate + NADP(+) = dihydroxyacetone phosphate + NADPH + H(+). It functions in the pathway membrane lipid metabolism; glycerophospholipid metabolism. In terms of biological role, catalyzes the NAD(P)H-dependent reduction of dihydroxyacetonephosphate (DHAP or glycerone phosphate) to glycerol 1-phosphate (G1P). The G1P thus generated is used as the glycerophosphate backbone of phospholipids in the cellular membranes of Archaea. This Haloquadratum walsbyi (strain DSM 16790 / HBSQ001) protein is Glycerol-1-phosphate dehydrogenase [NAD(P)+].